The primary structure comprises 347 residues: Dihydroorotase (347 aa).

Positions 17 and 19 each coordinate Zn(2+). Residues 19-21 and Asn-45 each bind substrate; that span reads HLR. Lys-103, His-140, and His-178 together coordinate Zn(2+). Lys-103 carries the N6-carboxylysine modification. A substrate-binding site is contributed by His-140. Leu-223 serves as a coordination point for substrate. Position 251 (Asp-251) interacts with Zn(2+). Residue Asp-251 is part of the active site. Positions 255 and 267 each coordinate substrate.

The protein belongs to the metallo-dependent hydrolases superfamily. DHOase family. Class II DHOase subfamily. As to quaternary structure, homodimer. Requires Zn(2+) as cofactor.

The catalysed reaction is (S)-dihydroorotate + H2O = N-carbamoyl-L-aspartate + H(+). Its pathway is pyrimidine metabolism; UMP biosynthesis via de novo pathway; (S)-dihydroorotate from bicarbonate: step 3/3. In terms of biological role, catalyzes the reversible cyclization of carbamoyl aspartate to dihydroorotate. The polypeptide is Dihydroorotase (Citrobacter koseri (strain ATCC BAA-895 / CDC 4225-83 / SGSC4696)).